We begin with the raw amino-acid sequence, 188 residues long: dCTP deaminase (188 aa).

Residue 109–114 participates in dCTP binding; sequence KSTYAR. The active-site Proton donor/acceptor is the glutamate 135. Residues glutamine 154, tyrosine 168, and glutamine 178 each contribute to the dCTP site.

This sequence belongs to the dCTP deaminase family. In terms of assembly, homotrimer.

It carries out the reaction dCTP + H2O + H(+) = dUTP + NH4(+). It functions in the pathway pyrimidine metabolism; dUMP biosynthesis; dUMP from dCTP (dUTP route): step 1/2. In terms of biological role, catalyzes the deamination of dCTP to dUTP. In Helicobacter hepaticus (strain ATCC 51449 / 3B1), this protein is dCTP deaminase.